Here is a 495-residue protein sequence, read N- to C-terminus: ATP synthase subunit beta, chloroplastic (495 aa).

ATP is bound at residue 172-179; sequence GGAGVGKT.

This sequence belongs to the ATPase alpha/beta chains family. F-type ATPases have 2 components, CF(1) - the catalytic core - and CF(0) - the membrane proton channel. CF(1) has five subunits: alpha(3), beta(3), gamma(1), delta(1), epsilon(1). CF(0) has four main subunits: a(1), b(1), b'(1) and c(9-12).

Its subcellular location is the plastid. The protein localises to the chloroplast thylakoid membrane. It carries out the reaction ATP + H2O + 4 H(+)(in) = ADP + phosphate + 5 H(+)(out). Produces ATP from ADP in the presence of a proton gradient across the membrane. The catalytic sites are hosted primarily by the beta subunits. This chain is ATP synthase subunit beta, chloroplastic, found in Pseudogaltonia clavata (Cape hyacinth).